Here is a 148-residue protein sequence, read N- to C-terminus: Protein J1 homolog (148 aa).

The protein belongs to the chordopoxvirinae J1 family. In terms of assembly, homodimer. Part of a complex composed of A30, G7, F10 kinase, A15, D2, D3, and J1. Interacts with A45.

The protein localises to the virion. The protein resides in the host cytoplasm. In terms of biological role, late protein which is a part of a large complex required for early virion morphogenesis. This complex participates in the formation of virosomes and the incorporation of virosomal contents into nascent immature virions. J1 protein is required for DNA packaging during immature virions (IV) formation. The protein is Protein J1 homolog of Fowlpox virus (strain NVSL) (FPV).